Reading from the N-terminus, the 315-residue chain is N-acetyl-D-glutamate racemase (315 aa).

The Mg(2+) site is built by Asp-147, Glu-173, and Asp-196.

The protein belongs to the mandelate racemase/muconate lactonizing enzyme family. The cofactor is Mg(2+).

The catalysed reaction is N-acetyl-D-glutamate = N-acetyl-L-glutamate. The protein operates within amino-acid degradation. In terms of biological role, racemase involved in a deamination-independent D-glutamate degradation pathway, named the DgcN-DgcA pathway. Catalyzes the conversion of N-acetyl-D-glutamate to N-acetyl-L-glutamate. Also shows racemase activity towards the dipeptide L-Ala-D-Glu, a key constituent of peptidoglycan muropeptides, suggesting that it may also contribute to the degradation of peptidoglycans. The polypeptide is N-acetyl-D-glutamate racemase (Pseudoalteromonas sp).